The sequence spans 880 residues: Alanine--tRNA ligase (880 aa).

Histidine 566, histidine 570, cysteine 668, and histidine 672 together coordinate Zn(2+).

The protein belongs to the class-II aminoacyl-tRNA synthetase family. Zn(2+) is required as a cofactor.

Its subcellular location is the cytoplasm. The enzyme catalyses tRNA(Ala) + L-alanine + ATP = L-alanyl-tRNA(Ala) + AMP + diphosphate. Functionally, catalyzes the attachment of alanine to tRNA(Ala) in a two-step reaction: alanine is first activated by ATP to form Ala-AMP and then transferred to the acceptor end of tRNA(Ala). Also edits incorrectly charged Ser-tRNA(Ala) and Gly-tRNA(Ala) via its editing domain. This chain is Alanine--tRNA ligase, found in Alkaliphilus oremlandii (strain OhILAs) (Clostridium oremlandii (strain OhILAs)).